Here is a 495-residue protein sequence, read N- to C-terminus: Leucine aminopeptidase 2 (495 aa).

The signal sequence occupies residues 1-21 (MKSQLLSLAVAVTTISQGVVG). Residues 124-218 (PPASKIMAEL…EDGKNLATLV (95 aa)) form the PA domain. N-linked (GlcNAc...) asparagine glycosylation is found at asparagine 142 and asparagine 235. The Zn(2+) site is built by histidine 259 and aspartate 271. An N-linked (GlcNAc...) asparagine glycan is attached at asparagine 272. Glutamate 303 acts as the Proton acceptor in catalysis. 2 residues coordinate Zn(2+): glutamate 304 and aspartate 332. Asparagine 352 carries an N-linked (GlcNAc...) asparagine glycan. Histidine 430 is a binding site for Zn(2+).

Belongs to the peptidase M28 family. M28A subfamily. In terms of assembly, monomer. It depends on Zn(2+) as a cofactor.

It is found in the secreted. With respect to regulation, activity is inhibited by EDTA, o-phenanthroline, bestatin and amastatin. Its function is as follows. Extracellular aminopeptidase that releases a wide variety of amino acids from natural peptides and contributes to pathogenicity. This chain is Leucine aminopeptidase 2 (LAP2), found in Trichophyton rubrum (Athlete's foot fungus).